Consider the following 141-residue polypeptide: uncharacterized protein (141 aa).

The protein belongs to the PhzA/PhzB family.

This is an uncharacterized protein from Pseudomonas aeruginosa (strain ATCC 15692 / DSM 22644 / CIP 104116 / JCM 14847 / LMG 12228 / 1C / PRS 101 / PAO1).